We begin with the raw amino-acid sequence, 33 residues long: Protamine-2C (33 aa).

A disordered region spans residues 1-33 (MPRRRRSSRRPVRRRRRPRVSRRRRRRGGRRRR).

As to expression, testis.

The protein resides in the nucleus. Its subcellular location is the chromosome. In terms of biological role, protamines substitute for histones in the chromatin of sperm during the haploid phase of spermatogenesis. They compact sperm DNA into a highly condensed, stable and inactive complex. The polypeptide is Protamine-2C (Oncorhynchus mykiss (Rainbow trout)).